The following is a 107-amino-acid chain: MPKLKVKKGDMVLVIAGKDKDKKGKIVQVLPKENRVVVEGVNIVKRHTRPNPKLPQGGIVEKEAPIHVSNVMVICPSCGKPTRVGKKFLADGKKIRVCKKCGESLDR.

The protein belongs to the universal ribosomal protein uL24 family. As to quaternary structure, part of the 50S ribosomal subunit.

Functionally, one of two assembly initiator proteins, it binds directly to the 5'-end of the 23S rRNA, where it nucleates assembly of the 50S subunit. One of the proteins that surrounds the polypeptide exit tunnel on the outside of the subunit. The chain is Large ribosomal subunit protein uL24 from Carboxydothermus hydrogenoformans (strain ATCC BAA-161 / DSM 6008 / Z-2901).